The chain runs to 500 residues: Cytochrome P450 11B3, mitochondrial (500 aa).

The transit peptide at 1–24 directs the protein to the mitochondrion; sequence MALRVTADVWLARPWQCLHRTRAL. Cys-447 serves as a coordination point for heme.

The protein belongs to the cytochrome P450 family. The cofactor is heme. In terms of tissue distribution, expressed in the adrenal cortex and in different brain tissues, including hippocampus, hypothalamus, cerebellum, cerebral cortex, and midbrain.

It is found in the mitochondrion membrane. It carries out the reaction a steroid + 2 reduced [adrenodoxin] + O2 + 2 H(+) = an 11beta-hydroxysteroid + 2 oxidized [adrenodoxin] + H2O. It catalyses the reaction 21-hydroxyprogesterone + 2 reduced [adrenodoxin] + O2 + 2 H(+) = corticosterone + 2 oxidized [adrenodoxin] + H2O. The catalysed reaction is 21-hydroxyprogesterone + 2 reduced [adrenodoxin] + O2 + 2 H(+) = 18-hydroxy-11-deoxycorticosterone + 2 oxidized [adrenodoxin] + H2O. The enzyme catalyses 21-hydroxyprogesterone + 2 reduced [adrenodoxin] + O2 + 2 H(+) = 19-hydroxy-11-deoxycorticosterone + 2 oxidized [adrenodoxin] + H2O. In terms of biological role, a cytochrome P450 monooxygenase involved in the biosynthesis of adrenal corticoids. Catalyzes the hydroxylation of steroids at 11beta, 18- or 19-positions, with preferred regioselectivity at 11beta and 18. Converts 11-deoxycorticosterone into corticosterone, 18-hydroxy-11-deoxycorticosterone, and/or 19-hydroxy-11-deoxycorticosterone, but not to 18-hydroxycorticosterone or aldosterone. Mechanistically, uses molecular oxygen inserting one oxygen atom into a substrate for hydroxylation and reducing the second into a water molecule. Two electrons are provided by NADPH via a two-protein mitochondrial transfer system comprising flavoprotein FDXR (adrenodoxin/ferredoxin reductase) and nonheme iron-sulfur protein FDX1 or FDX2 (adrenodoxin/ferredoxin). This Rattus norvegicus (Rat) protein is Cytochrome P450 11B3, mitochondrial (Cyp11b3).